Here is a 613-residue protein sequence, read N- to C-terminus: Transcription factor Sp2 (613 aa).

The tract at residues 1 to 32 (MSDPQTSMAATAAVSPSDYLQPAASTTQDSQP) is disordered. Residues 23-32 (AASTTQDSQP) are compositionally biased toward polar residues. S78 carries the post-translational modification Phosphoserine. Disordered stretches follow at residues 170-197 (SPSS…AQSG) and 225-255 (PGAA…LPAA). The span at 185 to 197 (QKSSTTTTPAQSG) shows a compositional bias: polar residues. Residues 361 to 369 (GEVQTVLVQ) carry the 9aaTAD; inactive motif. A compositionally biased stretch (low complexity) spans 374–392 (ATAATASTTTCSSPASRAA). Residues 374 to 402 (ATAATASTTTCSSPASRAAHLSGTSKKHS) are disordered. 3 C2H2-type zinc fingers span residues 525-549 (HVCH…VRLH), 555-579 (FVCN…ARTH), and 585-607 (FECA…YKTH).

The protein belongs to the Sp1 C2H2-type zinc-finger protein family.

The protein resides in the nucleus. Its function is as follows. Binds to GC box promoters elements and selectively activates mRNA synthesis from genes that contain functional recognition sites. The sequence is that of Transcription factor Sp2 (SP2) from Bos taurus (Bovine).